The primary structure comprises 189 residues: Elongation factor P (189 aa).

N6-(3,6-diaminohexanoyl)-5-hydroxylysine is present on lysine 34.

It belongs to the elongation factor P family. May be beta-lysylated on the epsilon-amino group of Lys-34 by the combined action of EpmA and EpmB, and then hydroxylated on the C5 position of the same residue by EpmC (if this protein is present). Lysylation is critical for the stimulatory effect of EF-P on peptide-bond formation. The lysylation moiety may extend toward the peptidyltransferase center and stabilize the terminal 3-CCA end of the tRNA. Hydroxylation of the C5 position on Lys-34 may allow additional potential stabilizing hydrogen-bond interactions with the P-tRNA.

The protein localises to the cytoplasm. Its pathway is protein biosynthesis; polypeptide chain elongation. Its function is as follows. Involved in peptide bond synthesis. Alleviates ribosome stalling that occurs when 3 or more consecutive Pro residues or the sequence PPG is present in a protein, possibly by augmenting the peptidyl transferase activity of the ribosome. Modification of Lys-34 is required for alleviation. The sequence is that of Elongation factor P from Francisella tularensis subsp. tularensis (strain FSC 198).